The sequence spans 497 residues: Membrane-bound lytic murein transglycosylase F (497 aa).

The first 29 residues, methionine 1–glutamate 29, serve as a signal peptide directing secretion. The non-LT domain stretch occupies residues lysine 30–valine 267. An LT domain region spans residues aspartate 268 to leucine 497. Glutamate 314 is a catalytic residue. Residues valine 464 to leucine 497 are disordered. Positions valine 486–leucine 497 are enriched in low complexity.

The protein in the N-terminal section; belongs to the bacterial solute-binding protein 3 family. It in the C-terminal section; belongs to the transglycosylase Slt family.

The protein resides in the cell outer membrane. The enzyme catalyses Exolytic cleavage of the (1-&gt;4)-beta-glycosidic linkage between N-acetylmuramic acid (MurNAc) and N-acetylglucosamine (GlcNAc) residues in peptidoglycan, from either the reducing or the non-reducing ends of the peptidoglycan chains, with concomitant formation of a 1,6-anhydrobond in the MurNAc residue.. Its function is as follows. Murein-degrading enzyme that degrades murein glycan strands and insoluble, high-molecular weight murein sacculi, with the concomitant formation of a 1,6-anhydromuramoyl product. Lytic transglycosylases (LTs) play an integral role in the metabolism of the peptidoglycan (PG) sacculus. Their lytic action creates space within the PG sacculus to allow for its expansion as well as for the insertion of various structures such as secretion systems and flagella. In Pseudomonas syringae pv. tomato (strain ATCC BAA-871 / DC3000), this protein is Membrane-bound lytic murein transglycosylase F.